The following is a 412-amino-acid chain: Poly-beta-1,6-N-acetyl-D-glucosamine synthase (412 aa).

Transmembrane regions (helical) follow at residues 6–26 (FLLF…IYFY), 298–318 (IISI…FITA), 332–352 (IFLL…TVAL), and 366–386 (LIFV…VVLV).

This sequence belongs to the glycosyltransferase 2 family.

The protein localises to the cell membrane. Its function is as follows. N-acetylglucosaminyltransferase that catalyzes the polymerization of single monomer units of UDP-N-acetylglucosamine to produce the linear homomer poly-beta-1,6-N-acetyl-D-glucosamine (PNAG, also referred to as PIA), a biofilm adhesin polysaccharide. Requires IcaD for full activity. The polypeptide is Poly-beta-1,6-N-acetyl-D-glucosamine synthase (icaA) (Staphylococcus aureus (strain NCTC 8325 / PS 47)).